A 382-amino-acid chain; its full sequence is Chaperone protein DnaJ (382 aa).

Positions 5 to 69 (DYYEILGVSK…EKRARYDRFG (65 aa)) constitute a J domain. The CR-type zinc finger occupies 137–219 (GKETEIEIPR…CGGTGRVKRR (83 aa)). 8 residues coordinate Zn(2+): Cys-150, Cys-153, Cys-167, Cys-170, Cys-193, Cys-196, Cys-207, and Cys-210. CXXCXGXG motif repeat units lie at residues 150 to 157 (CDTCQGSG), 167 to 174 (CPHCHGSG), 193 to 200 (CPVCGGTG), and 207 to 214 (CPTCGGTG). Residues 154-175 (QGSGAKPGTSPTSCPHCHGSGQ) are disordered.

The protein belongs to the DnaJ family. As to quaternary structure, homodimer. The cofactor is Zn(2+).

It localises to the cytoplasm. Functionally, participates actively in the response to hyperosmotic and heat shock by preventing the aggregation of stress-denatured proteins and by disaggregating proteins, also in an autonomous, DnaK-independent fashion. Unfolded proteins bind initially to DnaJ; upon interaction with the DnaJ-bound protein, DnaK hydrolyzes its bound ATP, resulting in the formation of a stable complex. GrpE releases ADP from DnaK; ATP binding to DnaK triggers the release of the substrate protein, thus completing the reaction cycle. Several rounds of ATP-dependent interactions between DnaJ, DnaK and GrpE are required for fully efficient folding. Also involved, together with DnaK and GrpE, in the DNA replication of plasmids through activation of initiation proteins. This is Chaperone protein DnaJ from Geobacillus kaustophilus (strain HTA426).